The sequence spans 506 residues: Phenylacetaldehyde synthase (506 aa).

Positions 101, 202, and 317 each coordinate L-phenylalanine. Residue K318 is modified to N6-(pyridoxal phosphate)lysine.

It belongs to the group II decarboxylase family. In terms of assembly, homotetramer. Requires pyridoxal 5'-phosphate as cofactor. In terms of tissue distribution, highly expressed in corolla limbs and at lower levels in corolla tubes and ovaries.

The catalysed reaction is L-phenylalanine + O2 + H2O + H(+) = 2-phenylacetaldehyde + H2O2 + NH4(+) + CO2. In terms of biological role, bifunctional enzyme that catalyzes the decarboxylation of L-phenylalanine to 2-phenylethylamine, which is then oxidized to form 2-phenylacetaldehyde, a constituent of floral scent. 2-phenylacetaldehyde is a precursor of 2-phenylethanol, another constituent of floral scent. The polypeptide is Phenylacetaldehyde synthase (Petunia hybrida (Petunia)).